The primary structure comprises 103 residues: Preprofallaxidin-6 (103 aa).

A signal peptide spans 1 to 22; it reads MASLKKSLFLVLFLGFVSLSIC. Positions 23–49 are excised as a propeptide; it reads EEEKRENEGNENEEEDENHEEGSEEKR. The segment at 24-50 is disordered; the sequence is EEKRENEGNENEEEDENHEEGSEEKRG. Acidic residues predominate over residues 31–41; that stretch reads GNENEEEDENH. Position 65 is a leucine amide (L65). The interval 67–103 is disordered; it reads KRSEEKRYHPFGKRSEEKRYHPFGKRSEEKRYPPIGK. The propeptide occupies 69–73; that stretch reads SEEKR. A Phenylalanine amide modification is found at F77. The propeptide occupies 81–85; that stretch reads SEEKR. Residue F89 is modified to Phenylalanine amide. A propeptide spanning residues 93–97 is cleaved from the precursor; it reads SEEKR. Position 101 is an isoleucine amide (I101).

Belongs to the frog skin active peptide (FSAP) family. Brevinin subfamily. In terms of tissue distribution, expressed by the skin glands.

Its subcellular location is the secreted. Its function is as follows. Fallaxidin-1.3 shows no antibacterial activity against Gram-positive or Gram-negative bacteria. Does not inhibit the formation of NO by neuronal nitric oxide synthase. Has no effect on splenocyte proliferation or smooth muscle contraction. Fallaxidin-1.4 shows no antibacterial activity against Gram-positive or Gram-negative bacteria. Does not inhibit the formation of NO by neuronal nitric oxide synthase. Has no effect on splenocyte proliferation or smooth muscle contraction. Functionally, fallaxidin-3.1 shows antibacterial activity against the Gram-positive bacteria E.faecalis (MIC=100 uM) and L.lactis (MIC=100 uM). No antibacterial activity against the Gram-positive bacteria B.cereus, L.innocua, M.luteus, S.epidermidis, S.uberis and S.aureus, or the Gram-negative bacteria E.cloacae and E.coli. This chain is Preprofallaxidin-6, found in Litoria fallax (Eastern dwarf tree frog).